Reading from the N-terminus, the 568-residue chain is Phosphoprotein (568 aa).

Residues 1–24 (MDQDAFFFERDPEAEGEAPRKQES) form a disordered region. The span at 7 to 23 (FFERDPEAEGEAPRKQE) shows a compositional bias: basic and acidic residues. Positions 33-41 (DVVLSYKPT) are N0 binding. Residues 45–324 (EDRSWLHGII…ANEEETSNTS (280 aa)) are disordered. Residues 58-105 (EENKPSCKADDNNKDRAISTPTQDHRSGEESGISRRTSESKTETHARL) are compositionally biased toward basic and acidic residues. The span at 107-121 (DQQSIHRASRRGTSP) shows a compositional bias: polar residues. Composition is skewed to basic and acidic residues over residues 132–144 (RNTRIDEDSPNER) and 151–167 (LTDEDRKMAEDSNKREE). Residues 190 to 208 (RTNNNGRSMETSSTHSTRI) are compositionally biased toward polar residues. Basic and acidic residues predominate over residues 239 to 253 (TRSERTQNSELHKST). Residues 294 to 305 (YTMNNANNNTKS) are compositionally biased toward polar residues. Positions 344 to 411 (FELSRSASHV…SSRDLHKRFS (68 aa)) are multimerization. The stretch at 387–416 (EENRTLLKQIQEEINSSRDLHKRFSEYQKE) forms a coiled coil. A l protein binding region spans residues 412–445 (EYQKEQNSLMMANLSTLHIITDRGGKTGDPSDTT). The tract at residues 434 to 455 (RGGKTGDPSDTTRSPSVFTKGK) is disordered. Polar residues predominate over residues 441–450 (PSDTTRSPSV). Residues 479 to 568 (DLIREDELRD…FEEDIDSLTN (90 aa)) form an interaction with the nucleocapsid (N-RNA) region.

The protein belongs to the respirovirus P protein family. As to quaternary structure, homotetramer. Interacts (via multimerization domain) with polymerase L; this interaction forms the polymerase complex. Interacts (via N-terminus) with N0; this interaction allows P to chaperon N0 before encapsidation and form the N-P complex. Interacts (via C-terminus) with N-RNA template; this interaction positions the polymerase on the template.

In terms of biological role, essential cofactor of the RNA polymerase L that plays a central role in the transcription and replication by forming the polymerase complex with RNA polymerase L and recruiting L to the genomic N-RNA template for RNA synthesis. Also plays a central role in the encapsidation of nascent RNA chains by forming the encapsidation complex with the nucleocapsid protein N (N-P complex). Acts as a chaperone for newly synthesized free N protein, so-called N0, allowing encapsidation of nascent RNA chains during replication. The nucleoprotein protein N prevents excessive phosphorylation of P, which leads to down-regulation of viral transcription/ replication. Participates, together with N, in the formation of viral factories (viroplasms), which are large inclusions in the host cytoplasm where replication takes place. Recruits host PI4KB and remodel the host endoplasmic reticulum membrane to form viral replication factories. The chain is Phosphoprotein (P/C) from Human parainfluenza 1 virus (strain C39) (HPIV-1).